A 265-amino-acid chain; its full sequence is Glutamate racemase (265 aa).

Substrate is bound by residues 12–13 and 44–45; these read DS and YG. Cys75 functions as the Proton donor/acceptor in the catalytic mechanism. 76 to 77 serves as a coordination point for substrate; that stretch reads NT. Cys186 acts as the Proton donor/acceptor in catalysis. 187–188 contacts substrate; it reads TH.

The protein belongs to the aspartate/glutamate racemases family.

It catalyses the reaction L-glutamate = D-glutamate. It participates in cell wall biogenesis; peptidoglycan biosynthesis. Provides the (R)-glutamate required for cell wall biosynthesis. The sequence is that of Glutamate racemase from Pseudomonas putida (strain GB-1).